We begin with the raw amino-acid sequence, 588 residues long: Aspartate--tRNA(Asp/Asn) ligase (588 aa).

L-aspartate is bound at residue Glu172. Residues 196–199 form an aspartate region; sequence QLFK. Residue Arg218 participates in L-aspartate binding. ATP-binding positions include 218–220 and Gln227; that span reads RDE. Residue His450 coordinates L-aspartate. Glu484 is an ATP binding site. Arg491 serves as a coordination point for L-aspartate. 536 to 539 lines the ATP pocket; it reads GLDR.

Belongs to the class-II aminoacyl-tRNA synthetase family. Type 1 subfamily. Homodimer.

The protein localises to the cytoplasm. It carries out the reaction tRNA(Asx) + L-aspartate + ATP = L-aspartyl-tRNA(Asx) + AMP + diphosphate. Aspartyl-tRNA synthetase with relaxed tRNA specificity since it is able to aspartylate not only its cognate tRNA(Asp) but also tRNA(Asn). Reaction proceeds in two steps: L-aspartate is first activated by ATP to form Asp-AMP and then transferred to the acceptor end of tRNA(Asp/Asn). The protein is Aspartate--tRNA(Asp/Asn) ligase of Nitrosospira multiformis (strain ATCC 25196 / NCIMB 11849 / C 71).